A 470-amino-acid chain; its full sequence is Sorting nexin-17 (470 aa).

Residues methionine 1–threonine 109 form the PX domain. 4 residues coordinate a 1,2-diacyl-sn-glycero-3-phospho-(1D-myo-inositol-3-phosphate): arginine 36, serine 38, lysine 62, and arginine 75. Positions glutamate 115 to tryptophan 206 constitute a Ras-associating domain. The FERM-like stretch occupies residues glutamate 115–leucine 432. Positions glycine 270–leucine 432 are PTB-like F3 module. Phosphoserine occurs at positions 336, 407, 409, 415, 421, 437, and 440. The disordered stretch occupies residues glycine 401–arginine 426.

The protein belongs to the sorting nexin family. In terms of assembly, monomer. Interacts with APP (via cytoplasmic YXNPXY motif). Interacts with KIF1B. Interacts with the C-termini of P-selectin, PTC, LDLR, VLDLR, LRP1 and LRP8. Interacts with KRIT1 (via N-terminus). Interacts with HRAS. Interacts with ITGB1 and ITGB5 (via NPxY motif). Interacts with CCDC22 and CCDC93; the interaction associates SNX17 with the CCC complex. Interacts (via C-terminus) with VPS26C and VPS35L; the interactions are direct and associate SNX17 with the retriever complex. Detected in brain neurons (at protein level). Broadly expressed, with highest levels in brain and placenta, and lowest levels in colon, intestine and liver.

The protein localises to the cytoplasm. The protein resides in the early endosome. Its subcellular location is the cytoplasmic vesicle membrane. Functionally, critical regulator of endosomal recycling of numerous surface proteins, including integrins, signaling receptor and channels. Binds to NPxY sequences in the cytoplasmic tails of target cargos. Associates with retriever and CCC complexes to prevent lysosomal degradation and promote cell surface recycling of numerous cargos such as integrins ITGB1, ITGB5 and their associated alpha subunits. Also required for maintenance of normal cell surface levels of APP and LRP1. Interacts with membranes containing phosphatidylinositol 3-phosphate (PtdIns(3P)). The chain is Sorting nexin-17 (Snx17) from Mus musculus (Mouse).